Here is an 82-residue protein sequence, read N- to C-terminus: Sec-independent protein translocase protein TatA (82 aa).

Residues 1–21 (MGGISIWQLLIIAVIIVLLFG) form a helical membrane-spanning segment. The tract at residues 48–82 (SAKDAKKDADFVPQNLEKKEAETVEKQKQNDKEQA) is disordered.

Belongs to the TatA/E family. As to quaternary structure, the Tat system comprises two distinct complexes: a TatABC complex, containing multiple copies of TatA, TatB and TatC subunits, and a separate TatA complex, containing only TatA subunits. Substrates initially bind to the TatABC complex, which probably triggers association of the separate TatA complex to form the active translocon.

The protein localises to the cell inner membrane. Part of the twin-arginine translocation (Tat) system that transports large folded proteins containing a characteristic twin-arginine motif in their signal peptide across membranes. TatA could form the protein-conducting channel of the Tat system. The chain is Sec-independent protein translocase protein TatA from Aliivibrio salmonicida (strain LFI1238) (Vibrio salmonicida (strain LFI1238)).